A 90-amino-acid polypeptide reads, in one-letter code: MARMVQCIKLGKEAEGLDFPPYPGELGKRLWENVSKEAWAAWLKQQTMLVNENRLNLADLRARQYLARQMEKHFFGEGADVAQGYVPPSN.

This sequence belongs to the Fe(2+)-trafficking protein family.

Its function is as follows. Could be a mediator in iron transactions between iron acquisition and iron-requiring processes, such as synthesis and/or repair of Fe-S clusters in biosynthetic enzymes. In Variovorax paradoxus (strain S110), this protein is Probable Fe(2+)-trafficking protein.